The chain runs to 193 residues: Segregation and condensation protein B (193 aa).

This sequence belongs to the ScpB family. As to quaternary structure, homodimer. Homodimerization may be required to stabilize the binding of ScpA to the Smc head domains. Component of a cohesin-like complex composed of ScpA, ScpB and the Smc homodimer, in which ScpA and ScpB bind to the head domain of Smc. The presence of the three proteins is required for the association of the complex with DNA.

The protein resides in the cytoplasm. Participates in chromosomal partition during cell division. May act via the formation of a condensin-like complex containing Smc and ScpA that pull DNA away from mid-cell into both cell halves. This chain is Segregation and condensation protein B, found in Shouchella clausii (strain KSM-K16) (Alkalihalobacillus clausii).